The chain runs to 354 residues: Methionine import ATP-binding protein MetN 2 (354 aa).

One can recognise an ABC transporter domain in the interval 6 to 250 (IELKNISVHF…PQKPLTKEFI (245 aa)). 42–49 (GYSGAGKS) contacts ATP.

This sequence belongs to the ABC transporter superfamily. Methionine importer (TC 3.A.1.24) family. As to quaternary structure, the complex is composed of two ATP-binding proteins (MetN), two transmembrane proteins (MetI) and a solute-binding protein (MetQ).

The protein resides in the cell membrane. The enzyme catalyses L-methionine(out) + ATP + H2O = L-methionine(in) + ADP + phosphate + H(+). It catalyses the reaction D-methionine(out) + ATP + H2O = D-methionine(in) + ADP + phosphate + H(+). In terms of biological role, part of the ABC transporter complex MetNIQ involved in methionine import. Responsible for energy coupling to the transport system. The sequence is that of Methionine import ATP-binding protein MetN 2 from Oenococcus oeni (strain ATCC BAA-331 / PSU-1).